A 97-amino-acid chain; its full sequence is Large ribosomal subunit protein bL28 (97 aa).

It belongs to the bacterial ribosomal protein bL28 family.

In Rickettsia africae (strain ESF-5), this protein is Large ribosomal subunit protein bL28.